A 163-amino-acid polypeptide reads, in one-letter code: Glyoxalase domain-containing protein 5 (163 aa).

Positions 41-161 (HLDHLVLTVR…DDNLIEVSNY (121 aa)) constitute a VOC domain.

The protein belongs to the glyoxalase I family.

This chain is Glyoxalase domain-containing protein 5 (glod5), found in Danio rerio (Zebrafish).